A 404-amino-acid chain; its full sequence is Glucose-1-phosphate adenylyltransferase (404 aa).

Alpha-D-glucose 1-phosphate is bound by residues Y99, G164, 179-180 (EK), and S197.

This sequence belongs to the bacterial/plant glucose-1-phosphate adenylyltransferase family.

The enzyme catalyses alpha-D-glucose 1-phosphate + ATP + H(+) = ADP-alpha-D-glucose + diphosphate. Its pathway is capsule biogenesis; capsule polysaccharide biosynthesis. It participates in glycan biosynthesis; glycogen biosynthesis. In terms of biological role, involved in the biosynthesis of ADP-glucose, a building block, required in the biosynthesis of maltose-1-phosphate (M1P) and in the elongation reactions to produce linear alpha-1,4-glucans. Catalyzes the reaction between ATP and alpha-D-glucose 1-phosphate (G1P) to produce pyrophosphate and ADP-Glc. The polypeptide is Glucose-1-phosphate adenylyltransferase (Mycobacterium marinum (strain ATCC BAA-535 / M)).